The sequence spans 481 residues: Trigger factor (481 aa).

A PPIase FKBP-type domain is found at 174–261 (GDIAVVGFKG…LKDLKTRELP (88 aa)). A disordered region spans residues 430–481 (ENSTVTEKAPEAESDAAKASKPAAAKKDASKAKTAKTSKAKTAKAESESAES). Over residues 437 to 447 (KAPEAESDAAK) the composition is skewed to basic and acidic residues. A compositionally biased stretch (basic residues) spans 462–471 (KTAKTSKAKT). The segment covering 472–481 (AKAESESAES) has biased composition (basic and acidic residues).

Belongs to the FKBP-type PPIase family. Tig subfamily.

The protein resides in the cytoplasm. The catalysed reaction is [protein]-peptidylproline (omega=180) = [protein]-peptidylproline (omega=0). In terms of biological role, involved in protein export. Acts as a chaperone by maintaining the newly synthesized protein in an open conformation. Functions as a peptidyl-prolyl cis-trans isomerase. The sequence is that of Trigger factor from Synechococcus sp. (strain WH7803).